Reading from the N-terminus, the 176-residue chain is Woronin body major protein (176 aa).

Residues 1 to 16 (MGYYDDDAHGHVEADA) constitute a propeptide that is removed on maturation. The segment covering 1–16 (MGYYDDDAHGHVEADA) has biased composition (basic and acidic residues). Residues 1–31 (MGYYDDDAHGHVEADAAPRATTGTGTGSASQ) are disordered. Residues 174–176 (SRL) carry the Microbody targeting signal motif.

This sequence belongs to the eIF-5A family. Hex1 subfamily. As to quaternary structure, forms oligomers. Self-assembles into hexagonal rods.

It localises to the cell septum. In terms of biological role, major component of Woronin bodies, fungal-specific organelles that occlude septal pores in order to separate intact from damaged compartments. Hex-1 binds directly or indirectly to the Woronin body tether that in turn is anchored at the rim of the septal pore. The chain is Woronin body major protein from Neurospora crassa (strain ATCC 24698 / 74-OR23-1A / CBS 708.71 / DSM 1257 / FGSC 987).